Reading from the N-terminus, the 492-residue chain is 2-succinylbenzoate--CoA ligase (492 aa).

This sequence belongs to the ATP-dependent AMP-binding enzyme family. MenE subfamily.

The catalysed reaction is 2-succinylbenzoate + ATP + CoA = 2-succinylbenzoyl-CoA + AMP + diphosphate. The protein operates within quinol/quinone metabolism; 1,4-dihydroxy-2-naphthoate biosynthesis; 1,4-dihydroxy-2-naphthoate from chorismate: step 5/7. It functions in the pathway quinol/quinone metabolism; menaquinone biosynthesis. In terms of biological role, converts 2-succinylbenzoate (OSB) to 2-succinylbenzoyl-CoA (OSB-CoA). This chain is 2-succinylbenzoate--CoA ligase, found in Staphylococcus aureus (strain Mu3 / ATCC 700698).